The chain runs to 142 residues: Hemoglobin subunit alpha-A (142 aa).

The 141-residue stretch at 2 to 142 (VLSPTDKSIV…VSTVLTSKYR (141 aa)) folds into the Globin domain. Histidine 59 contacts O2. Histidine 88 lines the heme b pocket.

This sequence belongs to the globin family. As to quaternary structure, heterotetramer of two alpha chains and two beta chains. In terms of tissue distribution, red blood cells.

In terms of biological role, involved in oxygen transport from the lung to the various peripheral tissues. The protein is Hemoglobin subunit alpha-A (HBAA) of Otolemur crassicaudatus (Brown greater galago).